Reading from the N-terminus, the 171-residue chain is MNKANSFSKEELVTCGHGNLFGANSPRLPIDNMLMIDRITKINDDGGEFGKGEIVAELDIDPSLWFFGCHFETDPVMPGCLGLDAMWQLVGFFLGWEGAEGKGRALGVGEVKFTGQVLPDAKKVTYKLTIKRKVYRKLVMGIADAVMEVDGREIYSATDLKVGIFTDTSSF.

His70 is a catalytic residue.

The protein belongs to the thioester dehydratase family. FabA subfamily. In terms of assembly, homodimer.

It is found in the cytoplasm. It catalyses the reaction a (3R)-hydroxyacyl-[ACP] = a (2E)-enoyl-[ACP] + H2O. It carries out the reaction (3R)-hydroxydecanoyl-[ACP] = (2E)-decenoyl-[ACP] + H2O. The catalysed reaction is (2E)-decenoyl-[ACP] = (3Z)-decenoyl-[ACP]. It participates in lipid metabolism; fatty acid biosynthesis. Its function is as follows. Necessary for the introduction of cis unsaturation into fatty acids. Catalyzes the dehydration of (3R)-3-hydroxydecanoyl-ACP to E-(2)-decenoyl-ACP and then its isomerization to Z-(3)-decenoyl-ACP. Can catalyze the dehydratase reaction for beta-hydroxyacyl-ACPs with saturated chain lengths up to 16:0, being most active on intermediate chain length. This Shewanella loihica (strain ATCC BAA-1088 / PV-4) protein is 3-hydroxydecanoyl-[acyl-carrier-protein] dehydratase.